A 353-amino-acid polypeptide reads, in one-letter code: uncharacterized protein (353 aa).

Positions 18–83 constitute an HTH luxR-type domain; it reads NIEFPCLLSE…TLWRDVFLRF (66 aa). The segment at residues 42–61 is a DNA-binding region (H-T-H motif); it reads VNEISKRRNRSIKTVSCQKM. In terms of domain architecture, EAL spans 98 to 350; that stretch reads NSSVLPVVSS…AFVRKLLASL (253 aa).

This is an uncharacterized protein from Escherichia coli (strain K12).